The chain runs to 254 residues: Thiazole synthase (254 aa).

The active-site Schiff-base intermediate with DXP is Lys95. 1-deoxy-D-xylulose 5-phosphate contacts are provided by residues Gly156, 182-183 (AG), and 204-205 (NT).

This sequence belongs to the ThiG family. In terms of assembly, homotetramer. Forms heterodimers with either ThiH or ThiS.

It is found in the cytoplasm. The enzyme catalyses [ThiS sulfur-carrier protein]-C-terminal-Gly-aminoethanethioate + 2-iminoacetate + 1-deoxy-D-xylulose 5-phosphate = [ThiS sulfur-carrier protein]-C-terminal Gly-Gly + 2-[(2R,5Z)-2-carboxy-4-methylthiazol-5(2H)-ylidene]ethyl phosphate + 2 H2O + H(+). It participates in cofactor biosynthesis; thiamine diphosphate biosynthesis. Functionally, catalyzes the rearrangement of 1-deoxy-D-xylulose 5-phosphate (DXP) to produce the thiazole phosphate moiety of thiamine. Sulfur is provided by the thiocarboxylate moiety of the carrier protein ThiS. In vitro, sulfur can be provided by H(2)S. This chain is Thiazole synthase, found in Shewanella sp. (strain W3-18-1).